The chain runs to 532 residues: uncharacterized protein (532 aa).

Disordered stretches follow at residues 26-84, 97-129, and 157-470; these read KALR…TDSE, VFDESVSSDTDSEESHEEKRILPLGTPGQQVGR, and SKAA…HTCQ. Over residues 30–40 the composition is skewed to low complexity; sequence GNNNGSSTSGG. Residues 67-80 are compositionally biased toward polar residues; that stretch reads DIISQARRQVSLSR. The segment covering 157-181 has biased composition (basic and acidic residues); it reads SKAAGEESKRHAHFESIQEEEKISE. The span at 198 to 213 shows a compositional bias: low complexity; the sequence is IQSGSESSDSDSIIFD. Residues 237–249 are compositionally biased toward basic and acidic residues; the sequence is VEKKIEKPAVKEQ. Composition is skewed to low complexity over residues 259–290, 298–315, and 326–335; these read PTPTESSFESSSDSSSTSESSTSSESSSSASE, ESQVSSSKTSTSKASSSK, and SSSSSASTIS. The segment covering 347-356 has biased composition (basic residues); sequence KTKKPDKKRA. Basic and acidic residues-rich tracts occupy residues 357–368, 389–403, 410–419, and 437–448; these read KPDDIRQNKKPE, STVRETNRTLEESLK, KSSEKMEKPR, and RDAEREQDIERR. Basic residues predominate over residues 449–461; that stretch reads REKRARRFRSRRR.

This is an uncharacterized protein from Caenorhabditis elegans.